Reading from the N-terminus, the 352-residue chain is Holliday junction branch migration complex subunit RuvB (352 aa).

A disordered region spans residues 1–26 (MIETDKLRAAAPERLISPQPADRQED). Positions 4–193 (TDKLRAAAPE…FGIVSRLEFY (190 aa)) are large ATPase domain (RuvB-L). Residues L32, R33, G74, K77, T78, T79, 140 to 142 (EDF), R183, Y193, and R230 each bind ATP. T78 contacts Mg(2+). The tract at residues 194–264 (TPDELGFIVS…VADAALRMLD (71 aa)) is small ATPAse domain (RuvB-S). The interval 267–352 (SLGLDLMDRK…RPGGTDLFGG (86 aa)) is head domain (RuvB-H). Positions 322 and 327 each coordinate DNA.

Belongs to the RuvB family. In terms of assembly, homohexamer. Forms an RuvA(8)-RuvB(12)-Holliday junction (HJ) complex. HJ DNA is sandwiched between 2 RuvA tetramers; dsDNA enters through RuvA and exits via RuvB. An RuvB hexamer assembles on each DNA strand where it exits the tetramer. Each RuvB hexamer is contacted by two RuvA subunits (via domain III) on 2 adjacent RuvB subunits; this complex drives branch migration. In the full resolvosome a probable DNA-RuvA(4)-RuvB(12)-RuvC(2) complex forms which resolves the HJ.

It is found in the cytoplasm. It carries out the reaction ATP + H2O = ADP + phosphate + H(+). Functionally, the RuvA-RuvB-RuvC complex processes Holliday junction (HJ) DNA during genetic recombination and DNA repair, while the RuvA-RuvB complex plays an important role in the rescue of blocked DNA replication forks via replication fork reversal (RFR). RuvA specifically binds to HJ cruciform DNA, conferring on it an open structure. The RuvB hexamer acts as an ATP-dependent pump, pulling dsDNA into and through the RuvAB complex. RuvB forms 2 homohexamers on either side of HJ DNA bound by 1 or 2 RuvA tetramers; 4 subunits per hexamer contact DNA at a time. Coordinated motions by a converter formed by DNA-disengaged RuvB subunits stimulates ATP hydrolysis and nucleotide exchange. Immobilization of the converter enables RuvB to convert the ATP-contained energy into a lever motion, pulling 2 nucleotides of DNA out of the RuvA tetramer per ATP hydrolyzed, thus driving DNA branch migration. The RuvB motors rotate together with the DNA substrate, which together with the progressing nucleotide cycle form the mechanistic basis for DNA recombination by continuous HJ branch migration. Branch migration allows RuvC to scan DNA until it finds its consensus sequence, where it cleaves and resolves cruciform DNA. The polypeptide is Holliday junction branch migration complex subunit RuvB (Azoarcus sp. (strain BH72)).